Here is a 643-residue protein sequence, read N- to C-terminus: Type VI secretion system spike protein VgrG1a (643 aa).

It belongs to the VgrG protein family. As to quaternary structure, forms homotrimers. Part of the type VI secretion system (T6SS). Interacts with EagT6 and Tse6; these interactions are required for Tse6 loading onto VgrG1. Interacts with Hcp1.

It is found in the secreted. Part of the H1 type VI secretion system (H1-T6SS) specialized secretion system, which delivers several virulence factors in both prokaryotic and eukaryotic cells during infection. Forms the spike at the tip of the elongating tube formed by haemolysin co-regulated protein 1/Hcp1. Allows the delivery of the Tse6 toxin to target cells where it exerts its toxicity. This is Type VI secretion system spike protein VgrG1a from Pseudomonas aeruginosa (strain ATCC 15692 / DSM 22644 / CIP 104116 / JCM 14847 / LMG 12228 / 1C / PRS 101 / PAO1).